The primary structure comprises 249 residues: Cobalt transport protein CbiM (249 aa).

The first 27 residues, 1–27 (MKPLHRWLPVVIGAALLIIFESRAAYA), serve as a signal peptide directing secretion. The next 6 membrane-spanning stretches (helical) occupy residues 33–53 (GFLP…FWVL), 70–90 (LLLG…IPSV), 102–122 (LGTI…VLLF), 134–154 (TLGA…WLIW), 161–181 (APIW…TYVV), and 207–227 (IFAV…VLIF).

Belongs to the CbiM family. Forms an energy-coupling factor (ECF) transporter complex composed of an ATP-binding protein (A component, CbiO), a transmembrane protein (T component, CbiQ) and 2 possible substrate-capture proteins (S components, CbiM and CbiN) of unknown stoichimetry.

Its subcellular location is the cell membrane. It functions in the pathway cofactor biosynthesis; adenosylcobalamin biosynthesis. Its function is as follows. Part of the energy-coupling factor (ECF) transporter complex CbiMNOQ involved in cobalt import. This is Cobalt transport protein CbiM from Roseiflexus sp. (strain RS-1).